The chain runs to 198 residues: V-type ATP synthase subunit E 1 (198 aa).

This sequence belongs to the V-ATPase E subunit family.

In terms of biological role, produces ATP from ADP in the presence of a proton gradient across the membrane. This chain is V-type ATP synthase subunit E 1, found in Clostridium tetani (strain Massachusetts / E88).